A 459-amino-acid chain; its full sequence is Putrescine aminotransferase (459 aa).

Residues 150–151 and Q274 each bind pyridoxal 5'-phosphate; that span reads GT. K300 carries the N6-(pyridoxal phosphate)lysine modification. A pyridoxal 5'-phosphate-binding site is contributed by T332.

The protein belongs to the class-III pyridoxal-phosphate-dependent aminotransferase family. Putrescine aminotransferase subfamily. Pyridoxal 5'-phosphate is required as a cofactor.

The enzyme catalyses an alkane-alpha,omega-diamine + 2-oxoglutarate = an omega-aminoaldehyde + L-glutamate. It carries out the reaction putrescine + 2-oxoglutarate = 1-pyrroline + L-glutamate + H2O. The catalysed reaction is cadaverine + 2-oxoglutarate = 5-aminopentanal + L-glutamate. It functions in the pathway amine and polyamine degradation; putrescine degradation; 4-aminobutanal from putrescine (transaminase route): step 1/1. Functionally, catalyzes the aminotransferase reaction from putrescine to 2-oxoglutarate, leading to glutamate and 4-aminobutanal, which spontaneously cyclizes to form 1-pyrroline. This is the first step in one of two pathways for putrescine degradation, where putrescine is converted into 4-aminobutanoate (gamma-aminobutyrate or GABA) via 4-aminobutanal. Also functions as a cadaverine transaminase in a a L-lysine degradation pathway to succinate that proceeds via cadaverine, glutarate and L-2-hydroxyglutarate. The sequence is that of Putrescine aminotransferase from Klebsiella pneumoniae (strain 342).